Here is a 472-residue protein sequence, read N- to C-terminus: Adenosylhomocysteinase (472 aa).

3 residues coordinate substrate: T64, D138, and E198. Position 199–201 (199–201 (TTT)) interacts with NAD(+). Substrate-binding residues include K228 and D232. Residues N233, 262-267 (GFGDVG), E285, N320, 341-343 (IGH), and N386 contribute to the NAD(+) site.

Belongs to the adenosylhomocysteinase family. Requires NAD(+) as cofactor.

It localises to the cytoplasm. It catalyses the reaction S-adenosyl-L-homocysteine + H2O = L-homocysteine + adenosine. The protein operates within amino-acid biosynthesis; L-homocysteine biosynthesis; L-homocysteine from S-adenosyl-L-homocysteine: step 1/1. In terms of biological role, may play a key role in the regulation of the intracellular concentration of adenosylhomocysteine. This is Adenosylhomocysteinase from Prochlorococcus marinus (strain MIT 9215).